A 521-amino-acid polypeptide reads, in one-letter code: Probable xyloglucan galactosyltransferase GT14 (521 aa).

Topologically, residues 1 to 30 are cytoplasmic; it reads MRPKNYSQMEKPISITTGKFRTNNNNNHNN. Residues 31-51 form a helical; Signal-anchor for type II membrane protein membrane-spanning segment; sequence VWFVVPLFFILCFVLLCFDYS. The Lumenal portion of the chain corresponds to 52–521; that stretch reads ALFTDTDETA…SPYEEPQVLA (470 aa). The disordered stretch occupies residues 72 to 92; the sequence is TSSEFTKDDNFSRFPDDPSPD. Residues 76–87 show a composition bias toward basic and acidic residues; that stretch reads FTKDDNFSRFPD. N81, N177, N203, N249, N265, and N411 each carry an N-linked (GlcNAc...) asparagine glycan. The tract at residues 492–521 is disordered; it reads RQGKDGSDGFDDRDDYKYTFSPYEEPQVLA.

The protein belongs to the glycosyltransferase 47 family. In terms of tissue distribution, expressed in roots, hypocotyls, cotyledons, leaves, stems, stamens and carpels.

It localises to the golgi apparatus membrane. Its function is as follows. Functions in xyloglucan synthesis by adding side chains to the xylosylated glucan backbone. Involved in the galactosylation of hemicellulose xyloglucan. The sequence is that of Probable xyloglucan galactosyltransferase GT14 from Arabidopsis thaliana (Mouse-ear cress).